Consider the following 299-residue polypeptide: tRNA dimethylallyltransferase (299 aa).

10 to 17 (GPTASGKS) provides a ligand contact to ATP. 12 to 17 (TASGKS) is a substrate binding site.

The protein belongs to the IPP transferase family. Monomer. The cofactor is Mg(2+).

The enzyme catalyses adenosine(37) in tRNA + dimethylallyl diphosphate = N(6)-dimethylallyladenosine(37) in tRNA + diphosphate. Catalyzes the transfer of a dimethylallyl group onto the adenine at position 37 in tRNAs that read codons beginning with uridine, leading to the formation of N6-(dimethylallyl)adenosine (i(6)A). This is tRNA dimethylallyltransferase from Malacoplasma penetrans (strain HF-2) (Mycoplasma penetrans).